A 254-amino-acid polypeptide reads, in one-letter code: MRKVFLAGNWKMHYTSVEAADVAKQIVDGVYNINNNVVVMVTPTFTSLCKVCRVTKGTNVLLGAQNMSYENSGARTSEIAPSMLLEFGVDYVILGHSECRTYLGENDEIINKKVLTGLKHPFKYLILCVGETLEEREKGKTLDVVLNQVRNGLASVYESDLQRIILAYEPVWAIGTGKTATKEEAQEVHKAIRLEIQSLYSKSAADNIIIQYGGSVNVDNVEGLMGENDIDGALIGGASLKADSFLKIINKISK.

9–11 (NWK) contacts substrate. The Electrophile role is filled by H96. E169 serves as the catalytic Proton acceptor. Substrate is bound by residues G175, S215, and 236-237 (GG).

Belongs to the triosephosphate isomerase family. As to quaternary structure, homodimer.

Its subcellular location is the cytoplasm. It carries out the reaction D-glyceraldehyde 3-phosphate = dihydroxyacetone phosphate. It functions in the pathway carbohydrate biosynthesis; gluconeogenesis. The protein operates within carbohydrate degradation; glycolysis; D-glyceraldehyde 3-phosphate from glycerone phosphate: step 1/1. Its function is as follows. Involved in the gluconeogenesis. Catalyzes stereospecifically the conversion of dihydroxyacetone phosphate (DHAP) to D-glyceraldehyde-3-phosphate (G3P). This is Triosephosphate isomerase from Borrelia duttonii (strain Ly).